A 241-amino-acid polypeptide reads, in one-letter code: MSGHSKWNNIQGRKNAQDSKRSKVFQKLAREIFVAAKKGPDPSLNPSLRLVMDKAKAVNMPNDNIKRAIDKASGNTSGENYDEVTYEGYAPGGIAVLVHALTDNKNRTSTNVRVAFNKNGGSLGETGSVSYMFDRKGYLVILREGLTVDEEEFMLEAIEAGADDVEVSEDVFEIFTDPATFSEVKEALQEAGYTFATAELSMFPTVYNEIAENNQTQFDKMLEALEDDDDVQEVYTNAEIN.

Polar residues predominate over residues 1-14; it reads MSGHSKWNNIQGRK. The segment at 1–22 is disordered; it reads MSGHSKWNNIQGRKNAQDSKRS.

This sequence belongs to the TACO1 family.

It localises to the cytoplasm. This chain is Probable transcriptional regulatory protein lmo1535, found in Listeria monocytogenes serovar 1/2a (strain ATCC BAA-679 / EGD-e).